We begin with the raw amino-acid sequence, 132 residues long: ATP synthase epsilon chain (132 aa).

The protein belongs to the ATPase epsilon chain family. As to quaternary structure, F-type ATPases have 2 components, CF(1) - the catalytic core - and CF(0) - the membrane proton channel. CF(1) has five subunits: alpha(3), beta(3), gamma(1), delta(1), epsilon(1). CF(0) has three main subunits: a, b and c.

The protein resides in the cell membrane. Produces ATP from ADP in the presence of a proton gradient across the membrane. The sequence is that of ATP synthase epsilon chain from Desulfitobacterium hafniense (strain DSM 10664 / DCB-2).